The primary structure comprises 426 residues: tRNA (guanine(37)-N(1))-methyltransferase (426 aa).

Residues His-203, 242–243, 269–270, and Asn-292 contribute to the S-adenosyl-L-methionine site; these read DL and DA. Residues 374 to 426 form a disordered region; the sequence is RISFKMPTLKKRKDTENNDDQENNNNSSNNNNNNKIDYNEAVSSGGEGKKIKH. Residues 396–407 are compositionally biased toward low complexity; that stretch reads NNNNSSNNNNNN.

It belongs to the class I-like SAM-binding methyltransferase superfamily. TRM5/TYW2 family. Monomer.

Its subcellular location is the mitochondrion matrix. The protein resides in the nucleus. It is found in the cytoplasm. The enzyme catalyses guanosine(37) in tRNA + S-adenosyl-L-methionine = N(1)-methylguanosine(37) in tRNA + S-adenosyl-L-homocysteine + H(+). Its function is as follows. Specifically methylates the N1 position of guanosine-37 in various cytoplasmic and mitochondrial tRNAs. Methylation is not dependent on the nature of the nucleoside 5' of the target nucleoside. This is the first step in the biosynthesis of wybutosine (yW), a modified base adjacent to the anticodon of tRNAs and required for accurate decoding. This is tRNA (guanine(37)-N(1))-methyltransferase (trmt5) from Heterostelium pallidum (strain ATCC 26659 / Pp 5 / PN500) (Cellular slime mold).